A 643-amino-acid chain; its full sequence is COP9 signalosome complex subunit 10 (643 aa).

Positions M1–D33 are enriched in acidic residues. Positions M1–R37 are disordered. Positions C331–H517 constitute a PCI domain. The segment covering D573–S584 has biased composition (polar residues). Residues D573 to P594 form a disordered region.

In terms of assembly, component of a COP9 signalosome-like (CSN) complex.

Its subcellular location is the cytoplasm. The protein localises to the nucleus. In terms of biological role, component of the COP9 signalosome (CSN) complex that acts as an regulator of the ubiquitin (Ubl) conjugation pathway by mediating the deneddylation of the cullin subunit of SCF-type E3 ubiquitin-protein ligase complexes. The CSN complex is involved in the regulation of the mating pheromone response. The polypeptide is COP9 signalosome complex subunit 10 (RRI2) (Candida glabrata (strain ATCC 2001 / BCRC 20586 / JCM 3761 / NBRC 0622 / NRRL Y-65 / CBS 138) (Yeast)).